The chain runs to 290 residues: MFSGSIVALVTPMRNDSVDVHHLRELVEFHIAKGTHALVAAGTTGEAGTLSHSEKLLVIKTVIEQAKERVPVIAGTAMNATKDCIELTQQAMEYGAHAALIMTPAYIKPTQEGLYLHYSHIAQSVAIPIILYNVPGRTACDMLPETVARLAKISNIIGIKEATGQMTRLQQILRLCEGSIDVYSGDDLTAAQWLLAGAKGVISVTANVAAKLMAKMCDLAMDDDQAGCLRIQEQLMPLHELLFVESNPIPVKWAMNKMGLIGGELRLPMTELSEKHHQALEKVLKNLELI.

Thr-44 contacts pyruvate. The active-site Proton donor/acceptor is Tyr-132. Residue Lys-160 is the Schiff-base intermediate with substrate of the active site. Ile-202 is a pyruvate binding site.

Belongs to the DapA family. As to quaternary structure, homotetramer; dimer of dimers.

Its subcellular location is the cytoplasm. It carries out the reaction L-aspartate 4-semialdehyde + pyruvate = (2S,4S)-4-hydroxy-2,3,4,5-tetrahydrodipicolinate + H2O + H(+). It functions in the pathway amino-acid biosynthesis; L-lysine biosynthesis via DAP pathway; (S)-tetrahydrodipicolinate from L-aspartate: step 3/4. Catalyzes the condensation of (S)-aspartate-beta-semialdehyde [(S)-ASA] and pyruvate to 4-hydroxy-tetrahydrodipicolinate (HTPA). The protein is 4-hydroxy-tetrahydrodipicolinate synthase of Legionella pneumophila subsp. pneumophila (strain Philadelphia 1 / ATCC 33152 / DSM 7513).